The primary structure comprises 466 residues: Probable Xaa-Pro aminopeptidase pepP (466 aa).

Mn(2+) contacts are provided by Asp264, Asp275, Glu398, and Glu438.

This sequence belongs to the peptidase M24B family. The cofactor is Mn(2+).

It carries out the reaction Release of any N-terminal amino acid, including proline, that is linked to proline, even from a dipeptide or tripeptide.. Functionally, catalyzes the removal of a penultimate prolyl residue from the N-termini of peptides. The chain is Probable Xaa-Pro aminopeptidase pepP (pepP) from Aspergillus niger (strain ATCC MYA-4892 / CBS 513.88 / FGSC A1513).